Here is a 298-residue protein sequence, read N- to C-terminus: Protease HtpX homolog (298 aa).

The next 2 helical transmembrane spans lie at 14 to 34 (VVLL…AGYL) and 39 to 59 (YAMG…SMIF). Position 143 (His143) interacts with Zn(2+). Residue Glu144 is part of the active site. His147 contributes to the Zn(2+) binding site. The next 2 helical transmembrane spans lie at 158-178 (IAVA…RMLW) and 197-217 (IITL…ASLI). Glu226 lines the Zn(2+) pocket.

This sequence belongs to the peptidase M48B family. Zn(2+) serves as cofactor.

It localises to the cell membrane. In Streptococcus pyogenes serotype M28 (strain MGAS6180), this protein is Protease HtpX homolog.